The sequence spans 517 residues: MMLSVFGLSVPISATELLLASFVFCLVFWVVRAWQPRVPKGLKSPPGPWGWPLLGHVLTLGKNPHLVLARLSQHYGDVLQIRIGSTPVLVLSGLDTIRQALVRQGDDFKGRPNLYSFTLISEGQSMSFSPDSGPVWAARRRLAQNALKSFSIASDPASSSSCYLEDHVSKEAEYLIGKFQELMAKVGHFDPYRYVVVSVANVICAMCFGRRYDHDDQELLSIVNLSNEFGDGTASGNPVDFFPILRYLPNPALDFFKDVNEKFSIFIHKMVKEHYKTFEKGHIRDITDSLIEHCQDKRLDENANIQLSDEKIVNVVSDLFGAGFDTVTTAISWCLMYLVTSPNVQEKIQKELDTVIGRERQPRLSDRLQLPYMEAFILEMFRHTSFVPFTIPHSTTKDTSLSGFYIPKERCVFVNQWQINHDQKLWGDPSEFRPERFLTPDGTINKALSEKVILFGLGKRKCIGETIARLEVFLFLAILLQQVEFSVPQGTKVDMTPIYGLTMKHARCEHFQVRMRT.

Residues 34–45 (WQPRVPKGLKSP) are mitochondrial targeting signal. An O-linked (GlcNAc) serine glycan is attached at serine 72. Phenylalanine 229 serves as a coordination point for substrate. Heme is bound at residue cysteine 462.

It belongs to the cytochrome P450 family. Interacts with cytosolic chaperones HSP70 and HSP90; this interaction is required for initial targeting to mitochondria. Interacts (via mitochondrial targeting signal) with TOMM40 (via N-terminus); this interaction is required for translocation across the mitochondrial outer membrane. Requires heme as cofactor.

Its subcellular location is the endoplasmic reticulum membrane. The protein localises to the mitochondrion inner membrane. It localises to the microsome membrane. The protein resides in the cytoplasm. The catalysed reaction is an organic molecule + reduced [NADPH--hemoprotein reductase] + O2 = an alcohol + oxidized [NADPH--hemoprotein reductase] + H2O + H(+). It carries out the reaction estrone + reduced [NADPH--hemoprotein reductase] + O2 = 2-hydroxyestrone + oxidized [NADPH--hemoprotein reductase] + H2O + H(+). The enzyme catalyses estrone + reduced [NADPH--hemoprotein reductase] + O2 = 4-hydroxyestrone + oxidized [NADPH--hemoprotein reductase] + H2O + H(+). It catalyses the reaction estrone + reduced [NADPH--hemoprotein reductase] + O2 = 6alpha-hydroxyestrone + oxidized [NADPH--hemoprotein reductase] + H2O + H(+). The catalysed reaction is estrone + reduced [NADPH--hemoprotein reductase] + O2 = 15alpha-hydroxyestrone + oxidized [NADPH--hemoprotein reductase] + H2O + H(+). It carries out the reaction estrone + reduced [NADPH--hemoprotein reductase] + O2 = 16alpha-hydroxyestrone + oxidized [NADPH--hemoprotein reductase] + H2O + H(+). The enzyme catalyses 17beta-estradiol + reduced [NADPH--hemoprotein reductase] + O2 = 2-hydroxy-17beta-estradiol + oxidized [NADPH--hemoprotein reductase] + H2O + H(+). It catalyses the reaction 17beta-estradiol + reduced [NADPH--hemoprotein reductase] + O2 = 4-hydroxy-17beta-estradiol + oxidized [NADPH--hemoprotein reductase] + H2O + H(+). The catalysed reaction is 17beta-estradiol + reduced [NADPH--hemoprotein reductase] + O2 = 6alpha-hydroxy-17beta-estradiol + oxidized [NADPH--hemoprotein reductase] + H2O + H(+). It carries out the reaction 17beta-estradiol + reduced [NADPH--hemoprotein reductase] + O2 = 7alpha-hydroxy-17beta-estradiol + oxidized [NADPH--hemoprotein reductase] + H2O + H(+). The enzyme catalyses 17beta-estradiol + reduced [NADPH--hemoprotein reductase] + O2 = 15alpha-hydroxy-17beta-estradiol + oxidized [NADPH--hemoprotein reductase] + H2O + H(+). It catalyses the reaction (5Z,8Z,11Z)-eicosatrienoate + reduced [NADPH--hemoprotein reductase] + O2 = 19-hydroxy-(5Z,8Z,11Z)-eicosatrienoate + oxidized [NADPH--hemoprotein reductase] + H2O + H(+). The catalysed reaction is (5Z,8Z,11Z,14Z)-eicosatetraenoate + reduced [NADPH--hemoprotein reductase] + O2 = 16-hydroxy-(5Z,8Z,11Z,14Z)-eicosatetraenoate + oxidized [NADPH--hemoprotein reductase] + H2O + H(+). It carries out the reaction (5Z,8Z,11Z,14Z)-eicosatetraenoate + reduced [NADPH--hemoprotein reductase] + O2 = 17-hydroxy-(5Z,8Z,11Z,14Z)-eicosatetraenoate + oxidized [NADPH--hemoprotein reductase] + H2O + H(+). The enzyme catalyses (5Z,8Z,11Z,14Z)-eicosatetraenoate + reduced [NADPH--hemoprotein reductase] + O2 = 18-hydroxy-(5Z,8Z,11Z,14Z)-eicosatetraenoate + oxidized [NADPH--hemoprotein reductase] + H2O + H(+). It catalyses the reaction (5Z,8Z,11Z,14Z)-eicosatetraenoate + reduced [NADPH--hemoprotein reductase] + O2 = 19-hydroxy-(5Z,8Z,11Z,14Z)-eicosatetraenoate + oxidized [NADPH--hemoprotein reductase] + H2O + H(+). The catalysed reaction is (5Z,8Z,11Z,14Z,17Z)-eicosapentaenoate + reduced [NADPH--hemoprotein reductase] + O2 = 19-hydroxy-(5Z,8Z,11Z,14Z,17Z)-eicosapentaenoate + oxidized [NADPH--hemoprotein reductase] + H2O + H(+). It carries out the reaction (5Z,8Z,11Z,14Z)-eicosatetraenoate + reduced [NADPH--hemoprotein reductase] + O2 = (8R,9S)-epoxy-(5Z,11Z,14Z)-eicosatrienoate + oxidized [NADPH--hemoprotein reductase] + H2O + H(+). The enzyme catalyses (5Z,8Z,11Z,14Z)-eicosatetraenoate + reduced [NADPH--hemoprotein reductase] + O2 = (11R,12S)-epoxy-(5Z,8Z,14Z)-eicosatrienoate + oxidized [NADPH--hemoprotein reductase] + H2O + H(+). It catalyses the reaction (5Z,8Z,11Z,14Z)-eicosatetraenoate + reduced [NADPH--hemoprotein reductase] + O2 = (14S,15R)-epoxy-(5Z,8Z,11Z)-eicosatrienoate + oxidized [NADPH--hemoprotein reductase] + H2O + H(+). The catalysed reaction is (5Z,8Z,11Z,14Z)-eicosatetraenoate + reduced [NADPH--hemoprotein reductase] + O2 = (14R,15S)-epoxy-(5Z,8Z,11Z)-eicosatrienoate + oxidized [NADPH--hemoprotein reductase] + H2O + H(+). It carries out the reaction (5Z,8Z,11Z,14Z,17Z)-eicosapentaenoate + reduced [NADPH--hemoprotein reductase] + O2 = (17R,18S)-epoxy-(5Z,8Z,11Z,14Z)-eicosatetraenoate + oxidized [NADPH--hemoprotein reductase] + H2O + H(+). The enzyme catalyses (4Z,7Z,10Z,13Z,16Z,19Z)-docosahexaenoate + reduced [NADPH--hemoprotein reductase] + O2 = (19S,20R)-epoxy-(4Z,7Z,10Z,13Z,16Z)-docosapentaenoate + oxidized [NADPH--hemoprotein reductase] + H2O + H(+). It catalyses the reaction (4Z,7Z,10Z,13Z,16Z,19Z)-docosahexaenoate + reduced [NADPH--hemoprotein reductase] + O2 = (19R,20S)-epoxy-(4Z,7Z,10Z,13Z,16Z)-docosapentaenoate + oxidized [NADPH--hemoprotein reductase] + H2O + H(+). The catalysed reaction is all-trans-retinol + reduced [NADPH--hemoprotein reductase] + O2 = all-trans-retinal + oxidized [NADPH--hemoprotein reductase] + 2 H2O + H(+). It carries out the reaction all-trans-retinal + reduced [NADPH--hemoprotein reductase] + O2 = all-trans-retinoate + oxidized [NADPH--hemoprotein reductase] + H2O + 2 H(+). The enzyme catalyses (13S)-hydroperoxy-(9Z,11E)-octadecadienoate = 13-oxo-(9Z,11E)-octadecadienoate + H2O. It catalyses the reaction (12S)-hydroperoxy-(5Z,8Z,10E,14Z)-eicosatetraenoate = 12-oxo-(5Z,8Z,10E,14Z)-eicosatetraenoate + H2O. The catalysed reaction is (15S)-hydroperoxy-(5Z,8Z,11Z,13E)-eicosatetraenoate = 15-oxo-(5Z,8Z,11Z,13E)-eicosatetraenoate + H2O. It carries out the reaction (5S)-hydroperoxy-(6E,8Z,11Z,14Z)-eicosatetraenoate = 5-oxo-(6E,8Z,11Z,14Z)-eicosatetraenoate + H2O. The protein operates within steroid hormone biosynthesis. It participates in lipid metabolism; fatty acid metabolism. It functions in the pathway cofactor metabolism; retinol metabolism. Functionally, a cytochrome P450 monooxygenase involved in the metabolism of various endogenous substrates, including fatty acids, steroid hormones and vitamins. Mechanistically, uses molecular oxygen inserting one oxygen atom into a substrate, and reducing the second into a water molecule, with two electrons provided by NADPH via cytochrome P450 reductase (CPR; NADPH-ferrihemoprotein reductase). Catalyzes the hydroxylation of carbon-hydrogen bonds. Exhibits high catalytic activity for the formation of hydroxyestrogens from estrone (E1) and 17beta-estradiol (E2), namely 2-hydroxy E1 and E2, as well as D-ring hydroxylated E1 and E2 at the C15alpha and C16alpha positions. Displays different regioselectivities for polyunsaturated fatty acids (PUFA) hydroxylation. Catalyzes the epoxidation of double bonds of certain PUFA. Converts arachidonic acid toward epoxyeicosatrienoic acid (EET) regioisomers, 8,9-, 11,12-, and 14,15-EET, that function as lipid mediators in the vascular system. Displays an absolute stereoselectivity in the epoxidation of eicosapentaenoic acid (EPA) producing the 17(R),18(S) enantiomer. May play an important role in all-trans retinoic acid biosynthesis in extrahepatic tissues. Catalyzes two successive oxidative transformation of all-trans retinol to all-trans retinal and then to the active form all-trans retinoic acid. May also participate in eicosanoids metabolism by converting hydroperoxide species into oxo metabolites (lipoxygenase-like reaction, NADPH-independent). This chain is Cytochrome P450 1A1 (CYP1A1), found in Felis catus (Cat).